Consider the following 176-residue polypeptide: Transmembrane protein 238 (176 aa).

The segment at methionine 1–proline 21 is disordered. The Cytoplasmic segment spans residues methionine 1 to methionine 36. The segment covering glycine 9–serine 19 has biased composition (low complexity). Residues alanine 37–phenylalanine 57 form a helical membrane-spanning segment. Residues alanine 58–aspartate 69 lie on the Extracellular side of the membrane. Residues leucine 70–tyrosine 90 form a helical membrane-spanning segment. Over threonine 91–glutamate 176 the chain is Cytoplasmic. Residues serine 124–alanine 135 are compositionally biased toward low complexity. Residues serine 124–arginine 156 are disordered. Serine 175 is modified (phosphoserine).

The protein resides in the membrane. The polypeptide is Transmembrane protein 238 (Tmem238) (Mus musculus (Mouse)).